The primary structure comprises 331 residues: Ribosomal RNA small subunit methyltransferase H (331 aa).

S-adenosyl-L-methionine is bound by residues 38–40 (GGY), Asp-56, Phe-83, Asp-100, and Gln-107. The disordered stretch occupies residues 308–331 (TDAPAGPVDPQVLGMPLIPKKGRR).

Belongs to the methyltransferase superfamily. RsmH family.

Its subcellular location is the cytoplasm. It carries out the reaction cytidine(1402) in 16S rRNA + S-adenosyl-L-methionine = N(4)-methylcytidine(1402) in 16S rRNA + S-adenosyl-L-homocysteine + H(+). Specifically methylates the N4 position of cytidine in position 1402 (C1402) of 16S rRNA. This Cereibacter sphaeroides (strain ATCC 17025 / ATH 2.4.3) (Rhodobacter sphaeroides) protein is Ribosomal RNA small subunit methyltransferase H.